We begin with the raw amino-acid sequence, 506 residues long: BTB/POZ domain and ankyrin repeat-containing protein NPR5 (506 aa).

One can recognise a BTB domain in the interval 23 to 131; it reads SDVTFSVEGR…LYSGQVSLVP (109 aa). A C2HC NPR-type zinc finger spans residues 137–151; that stretch reads RPGCGERGCWHTHCA. 4 residues coordinate Zn(2+): cysteine 140, cysteine 145, histidine 147, and cysteine 150. ANK repeat units lie at residues 278-306, 307-337, 342-371, and 375-409; these read HKIR…GLNL, DDAL…DVNH, AGKT…DPNV, and DGVT…KLRL. The disordered stretch occupies residues 481-506; it reads KMNDGGDGDDGGSRGPSSLFSPHGFP.

It belongs to the plant 'ANKYRIN-BTB/POZ' family. 'NOOT-BOP-COCH-like' (NBCL) subfamily. As to quaternary structure, homodimer. Interacts with TGAL5, TGAL7, TGAL8 and TGAL11.

It is found in the nucleus. Its subcellular location is the cytoplasm. Its pathway is protein modification; protein ubiquitination. Functionally, may act as a substrate-specific adapter of an E3 ubiquitin-protein ligase complex (CUL3-RBX1-BTB) which mediates the ubiquitination and subsequent proteasomal degradation of target proteins. Transcriptional co-regulator involved in the promotion of leaf and floral meristem fate and determinacy. Required for the abscission of senescent organs, probably by regulating the cell wall disorganization in abscission zones (AZs, e.g. pulvini at the base of leaves). Maybe involved in defense response against pathogens. In Oryza sativa subsp. japonica (Rice), this protein is BTB/POZ domain and ankyrin repeat-containing protein NPR5.